The primary structure comprises 281 residues: Nucleotide-binding protein CTN_0898 (281 aa).

9 to 16 lines the ATP pocket; the sequence is GLSGAGKT. 58–61 is a GTP binding site; that stretch reads DVRS.

It belongs to the RapZ-like family.

In terms of biological role, displays ATPase and GTPase activities. This Thermotoga neapolitana (strain ATCC 49049 / DSM 4359 / NBRC 107923 / NS-E) protein is Nucleotide-binding protein CTN_0898.